We begin with the raw amino-acid sequence, 391 residues long: Saxitoxin and tetrodotoxin-binding protein 2 (391 aa).

An N-terminal signal peptide occupies residues 1–20; the sequence is MGAVPGVVLLLMLAVLGIRA. 2 consecutive repeat copies span residues 24 to 202 and 203 to 391. Asn41, Asn54, Asn63, Asn97, Asn234, Asn268, Asn277, and Asn307 each carry an N-linked (GlcNAc...) asparagine glycan.

In terms of assembly, homodimer or heterodimer of PSTBP1 and PSTBP2. Glycosylated.

It localises to the secreted. Functionally, binds both saxitoxin and tetradotoxin. May play a role in toxin accumulation and/or excretion. The sequence is that of Saxitoxin and tetrodotoxin-binding protein 2 (psbp2) from Takifugu pardalis (Panther puffer).